A 310-amino-acid chain; its full sequence is uncharacterized protein (310 aa).

The tract at residues 1–70 (MAGNSQRRGA…ARGRTDETET (70 aa)) is disordered. Residues 49–62 (AAKRAKAQQRRPAR) show a composition bias toward basic residues. 3 residues coordinate S-adenosyl-L-methionine: Gly-262, Val-282, and Leu-291.

It belongs to the class IV-like SAM-binding methyltransferase superfamily. RNA methyltransferase TrmH family.

This is an uncharacterized protein from Mycobacterium ulcerans (strain Agy99).